A 317-amino-acid polypeptide reads, in one-letter code: Signal recognition particle receptor FtsY (317 aa).

GTP-binding positions include 117 to 124 (GVNGVGKT), 199 to 203 (DTAGR), and 263 to 266 (TKLD).

The protein belongs to the GTP-binding SRP family. FtsY subfamily. As to quaternary structure, part of the signal recognition particle protein translocation system, which is composed of SRP and FtsY.

The protein localises to the cell membrane. It localises to the cytoplasm. It carries out the reaction GTP + H2O = GDP + phosphate + H(+). Involved in targeting and insertion of nascent membrane proteins into the cytoplasmic membrane. Acts as a receptor for the complex formed by the signal recognition particle (SRP) and the ribosome-nascent chain (RNC). The sequence is that of Signal recognition particle receptor FtsY from Deinococcus radiodurans (strain ATCC 13939 / DSM 20539 / JCM 16871 / CCUG 27074 / LMG 4051 / NBRC 15346 / NCIMB 9279 / VKM B-1422 / R1).